The chain runs to 217 residues: Histone H1-gamma, late (217 aa).

Disordered regions lie at residues 1–21 (MSAA…HPPS) and 80–217 (GKGA…PAKK). The 75-residue stretch at 17-91 (AHPPSSQMVV…GASGSFKLGK (75 aa)) folds into the H15 domain. Residues 104 to 113 (IAAKKAKLAA) are compositionally biased toward basic residues. Basic and acidic residues predominate over residues 114-123 (KKKEQREKKA). Positions 124–217 (LKTKARKEKV…AKKAAKPAKK (94 aa)) are enriched in basic residues.

The protein belongs to the histone H1/H5 family.

The protein localises to the nucleus. The protein resides in the chromosome. Histones H1 are necessary for the condensation of nucleosome chains into higher-order structures. This chain is Histone H1-gamma, late, found in Strongylocentrotus purpuratus (Purple sea urchin).